The primary structure comprises 437 residues: tRNA-2-methylthio-N(6)-dimethylallyladenosine synthase (437 aa).

The 118-residue stretch at 3-120 folds into the MTTase N-terminal domain; sequence RKLFIETHGC…LPEMIDAART (118 aa). Residues Cys12, Cys49, Cys83, Cys157, Cys161, and Cys164 each contribute to the [4Fe-4S] cluster site. The Radical SAM core domain maps to 143 to 370; the sequence is RVDGPSAYVS…QQRINQQGFE (228 aa). The TRAM domain maps to 373–437; it reads RRMVGTTQRI…PHSLRGSLLS (65 aa).

This sequence belongs to the methylthiotransferase family. MiaB subfamily. Monomer. [4Fe-4S] cluster serves as cofactor.

The protein localises to the cytoplasm. The catalysed reaction is N(6)-dimethylallyladenosine(37) in tRNA + (sulfur carrier)-SH + AH2 + 2 S-adenosyl-L-methionine = 2-methylsulfanyl-N(6)-dimethylallyladenosine(37) in tRNA + (sulfur carrier)-H + 5'-deoxyadenosine + L-methionine + A + S-adenosyl-L-homocysteine + 2 H(+). Catalyzes the methylthiolation of N6-(dimethylallyl)adenosine (i(6)A), leading to the formation of 2-methylthio-N6-(dimethylallyl)adenosine (ms(2)i(6)A) at position 37 in tRNAs that read codons beginning with uridine. The chain is tRNA-2-methylthio-N(6)-dimethylallyladenosine synthase from Stutzerimonas stutzeri (strain A1501) (Pseudomonas stutzeri).